A 274-amino-acid polypeptide reads, in one-letter code: Pyrroline-5-carboxylate reductase 3 (274 aa).

A2 is subject to N-acetylalanine.

This sequence belongs to the pyrroline-5-carboxylate reductase family. In terms of assembly, homodecamer; composed of 5 homodimers.

The protein resides in the cytoplasm. It carries out the reaction L-proline + NADP(+) = (S)-1-pyrroline-5-carboxylate + NADPH + 2 H(+). The catalysed reaction is L-proline + NAD(+) = (S)-1-pyrroline-5-carboxylate + NADH + 2 H(+). Its pathway is amino-acid biosynthesis; L-proline biosynthesis; L-proline from L-glutamate 5-semialdehyde: step 1/1. Its function is as follows. Oxidoreductase that catalyzes the last step in proline biosynthesis, which corresponds to the reduction of pyrroline-5-carboxylate (P5C) to L-proline using NAD(P)H. Proline is synthesized from either glutamate or ornithine; both are converted to P5C, and then to proline via pyrroline-5-carboxylate reductases (PYCRs). PYCR3 is exclusively linked to the biosynthesis of proline from ornithine. This is Pyrroline-5-carboxylate reductase 3 from Mus musculus (Mouse).